The sequence spans 260 residues: MGAQDQNGKNHGGLFRDFQNRNVKKMWPLVMPITIILLVMIFMISSYSRVKKVTVSGNEIVSDQQIKAFSPVKKGTSLFAVWGKTDKLAQSLKQRSRRMQSVKMKLVNFNQVKIKVEEYPTIGYLFVHGGYQPILKSGVIIKGKVLNPKAGFPVLKKFQNPKKLRRTIKQYRRISPPVRAVMNTISFSPTKSNPDRIFIQMSDGNKVYASISTFGDKMDYYPSISSKLKVKSVINLEVGAYSYPIPQKQTSTKTTSVQGY.

At 1-25 the chain is on the cytoplasmic side; it reads MGAQDQNGKNHGGLFRDFQNRNVKK. A helical membrane pass occupies residues 26–46; the sequence is MWPLVMPITIILLVMIFMISS. Residues 47–260 are Extracellular-facing; the sequence is YSRVKKVTVS…STKTTSVQGY (214 aa). In terms of domain architecture, POTRA spans 48–119; it reads SRVKKVTVSG…NQVKIKVEEY (72 aa).

The protein belongs to the FtsQ/DivIB family. DivIB subfamily.

Its subcellular location is the cell membrane. Cell division protein that may be involved in stabilizing or promoting the assembly of the division complex. The polypeptide is Cell division protein DivIB (Lentilactobacillus buchneri (strain NRRL B-30929) (Lactobacillus buchneri)).